Here is a 613-residue protein sequence, read N- to C-terminus: Coiled-coil domain-containing protein 116 (613 aa).

A disordered region spans residues K41 to Q68. A compositionally biased stretch (polar residues) spans T51–Q60. Residues E79 to A104 are a coiled coil. Disordered regions lie at residues C329–A395, R509–E541, and M565–V613. Position 386 is a phosphoserine (S386). The segment covering S512–A539 has biased composition (polar residues). Positions K577 to A589 are enriched in basic and acidic residues. The span at E590–V613 shows a compositional bias: acidic residues.

The protein resides in the cytoplasm. Its subcellular location is the cytoskeleton. It is found in the microtubule organizing center. It localises to the centrosome. The sequence is that of Coiled-coil domain-containing protein 116 (CCDC116) from Homo sapiens (Human).